Here is a 34-residue protein sequence, read N- to C-terminus: Photosystem II reaction center protein Psb30 (34 aa).

The helical transmembrane segment at 6 to 26 (VIGQLTSLAMIVLVGPAVIVV) threads the bilayer.

Belongs to the Psb30/Ycf12 family. PSII is composed of 1 copy each of membrane proteins PsbA, PsbB, PsbC, PsbD, PsbE, PsbF, PsbH, PsbI, PsbJ, PsbK, PsbL, PsbM, PsbT, PsbX, PsbY, PsbZ, Psb30/Ycf12, peripheral proteins of the oxygen-evolving complex and a large number of cofactors. It forms dimeric complexes.

It is found in the plastid. The protein resides in the chloroplast thylakoid membrane. Functionally, a core subunit of photosystem II (PSII), probably helps stabilize the reaction center. This Gracilaria tenuistipitata var. liui (Red alga) protein is Photosystem II reaction center protein Psb30.